A 535-amino-acid polypeptide reads, in one-letter code: Ribonuclease Y (535 aa).

A helical membrane pass occupies residues 4-24; sequence IILLIVSALIGLILGYALISI. The disordered stretch occupies residues 118–141; it reads ENLSSKEKVLDSKEQSLTDKSKHI. The KH domain occupies 225–285; sequence TITSVHLPDD…IRREIARMTL (61 aa). The region spanning 351-444 is the HD domain; that stretch reads VLRHSVEVGK…VAAADALSSA (94 aa).

This sequence belongs to the RNase Y family.

The protein localises to the cell membrane. Its function is as follows. Endoribonuclease that initiates mRNA decay. This chain is Ribonuclease Y, found in Streptococcus pyogenes serotype M18 (strain MGAS8232).